Consider the following 443-residue polypeptide: Glutamate--tRNA ligase 1 (443 aa).

The 'HIGH' region motif lies at 7 to 17 (PSPTGYLHVGN). The 'KMSKS' region signature appears at 236–240 (KISKR). Lys239 provides a ligand contact to ATP.

This sequence belongs to the class-I aminoacyl-tRNA synthetase family. Glutamate--tRNA ligase type 1 subfamily. Monomer.

The protein resides in the cytoplasm. The enzyme catalyses tRNA(Glu) + L-glutamate + ATP = L-glutamyl-tRNA(Glu) + AMP + diphosphate. Functionally, catalyzes the attachment of glutamate to tRNA(Glu) in a two-step reaction: glutamate is first activated by ATP to form Glu-AMP and then transferred to the acceptor end of tRNA(Glu). The polypeptide is Glutamate--tRNA ligase 1 (Ehrlichia chaffeensis (strain ATCC CRL-10679 / Arkansas)).